The primary structure comprises 405 residues: mRNA cap guanine-N(7) methyltransferase (405 aa).

A disordered region spans residues 1-78; sequence MDNILNPEDN…PRLEEGHGSL (78 aa). 2 stretches are compositionally biased toward polar residues: residues 9-18 and 36-45; these read DNVSQTNTET and KFTASGQNLD. The span at 58–75 shows a compositional bias: basic and acidic residues; that stretch reads KAGEPESPSKRPRLEEGH. Residues 97 to 404 form the mRNA cap 0 methyltransferase domain; the sequence is SRIFHLRNFN…IYLLFAFEKQ (308 aa). Residue 106 to 107 participates in mRNA binding; it reads NN. S-adenosyl-L-methionine-binding residues include lysine 110, glycine 134, aspartate 156, aspartate 190, glutamine 213, and tyrosine 218.

The protein belongs to the class I-like SAM-binding methyltransferase superfamily. mRNA cap 0 methyltransferase family.

The protein localises to the nucleus. The catalysed reaction is a 5'-end (5'-triphosphoguanosine)-ribonucleoside in mRNA + S-adenosyl-L-methionine = a 5'-end (N(7)-methyl 5'-triphosphoguanosine)-ribonucleoside in mRNA + S-adenosyl-L-homocysteine. Catalytic subunit of the mRNA-capping methyltransferase RNMT:RAMAC complex that methylates the N7 position of the added guanosine to the 5'-cap structure of mRNAs. Binds RNA containing 5'-terminal GpppC. The chain is mRNA cap guanine-N(7) methyltransferase (rnmt) from Xenopus tropicalis (Western clawed frog).